Consider the following 373-residue polypeptide: Methionine import ATP-binding protein MetN 1 (373 aa).

Residues 29 to 270 enclose the ABC transporter domain; it reads ILIDRVRKVY…PRHEVTRRFV (242 aa). Residue 67-74 participates in ATP binding; it reads GRSGAGKS.

It belongs to the ABC transporter superfamily. Methionine importer (TC 3.A.1.24) family. The complex is composed of two ATP-binding proteins (MetN), two transmembrane proteins (MetI) and a solute-binding protein (MetQ).

It localises to the cell inner membrane. It catalyses the reaction L-methionine(out) + ATP + H2O = L-methionine(in) + ADP + phosphate + H(+). It carries out the reaction D-methionine(out) + ATP + H2O = D-methionine(in) + ADP + phosphate + H(+). Functionally, part of the ABC transporter complex MetNIQ involved in methionine import. Responsible for energy coupling to the transport system. This chain is Methionine import ATP-binding protein MetN 1, found in Rhodopseudomonas palustris (strain ATCC BAA-98 / CGA009).